Here is a 140-residue protein sequence, read N- to C-terminus: MTIQYTFSMIKPDVIKRNKIGQVNTYLENAGLKIVAQKMKFLTKYEAECFYDEHRARPFFNSLVEYITSGAVVLQVLKGEDAITLNRIIMGATNPAEAKEGTIRKDLGESIEANSIHGSDSENSAKREIKFFFSKSEIIE.

The ATP site is built by Lys-11, Phe-59, Arg-87, Thr-93, Arg-104, and Asn-114. Residue His-117 is the Pros-phosphohistidine intermediate of the active site.

It belongs to the NDK family. Homotetramer. Mg(2+) serves as cofactor.

Its subcellular location is the cytoplasm. The enzyme catalyses a 2'-deoxyribonucleoside 5'-diphosphate + ATP = a 2'-deoxyribonucleoside 5'-triphosphate + ADP. It catalyses the reaction a ribonucleoside 5'-diphosphate + ATP = a ribonucleoside 5'-triphosphate + ADP. Functionally, major role in the synthesis of nucleoside triphosphates other than ATP. The ATP gamma phosphate is transferred to the NDP beta phosphate via a ping-pong mechanism, using a phosphorylated active-site intermediate. This is Nucleoside diphosphate kinase from Rickettsia typhi (strain ATCC VR-144 / Wilmington).